We begin with the raw amino-acid sequence, 457 residues long: Ribulose bisphosphate carboxylase large chain (457 aa).

Positions 1–2 are excised as a propeptide; it reads MS. Pro-3 carries the N-acetylproline modification. Lys-14 bears the N6,N6,N6-trimethyllysine mark. Substrate contacts are provided by Asn-123 and Thr-173. Catalysis depends on Lys-175, which acts as the Proton acceptor. Lys-177 serves as a coordination point for substrate. Residues Lys-201, Asp-203, and Glu-204 each coordinate Mg(2+). Position 201 is an N6-carboxylysine (Lys-201). The active-site Proton acceptor is the His-294. Residues Arg-295, His-327, and Ser-379 each contribute to the substrate site.

Belongs to the RuBisCO large chain family. Type I subfamily. In terms of assembly, heterohexadecamer of 8 large chains and 8 small chains; disulfide-linked. The disulfide link is formed within the large subunit homodimers. Mg(2+) serves as cofactor. The disulfide bond which can form in the large chain dimeric partners within the hexadecamer appears to be associated with oxidative stress and protein turnover.

The protein resides in the plastid. It localises to the chloroplast. The catalysed reaction is 2 (2R)-3-phosphoglycerate + 2 H(+) = D-ribulose 1,5-bisphosphate + CO2 + H2O. It carries out the reaction D-ribulose 1,5-bisphosphate + O2 = 2-phosphoglycolate + (2R)-3-phosphoglycerate + 2 H(+). RuBisCO catalyzes two reactions: the carboxylation of D-ribulose 1,5-bisphosphate, the primary event in carbon dioxide fixation, as well as the oxidative fragmentation of the pentose substrate in the photorespiration process. Both reactions occur simultaneously and in competition at the same active site. The chain is Ribulose bisphosphate carboxylase large chain from Phelline comosa.